We begin with the raw amino-acid sequence, 415 residues long: Sphingomyelin synthase-related protein 1 (415 aa).

Residues 12 to 78 (WTTKHVAVWL…MLSVRKLQKI (67 aa)) enclose the SAM domain. 4 helical membrane passes run 153 to 173 (ILSC…MVIV), 201 to 221 (FAMT…VLLL), 232 to 252 (LCSL…VTSL), and 277 to 297 (FAIW…GDYM). Residue His-301 is part of the active site. A helical transmembrane segment spans residues 322-342 (FLHTLSWVLNLFGIFFILAAH). Catalysis depends on residues His-344 and Asp-348. The chain crosses the membrane as a helical span at residues 347 to 367 (IDVFIAFYITTRLFLYYHTLA). Residues 368–415 (NTRAYQQSRRARIWFPMFSFFECNVNGTVPNEYCWPFSKPAIMKRLIG) lie on the Cytoplasmic side of the membrane.

The protein belongs to the sphingomyelin synthase family.

The protein resides in the endoplasmic reticulum membrane. It catalyses the reaction an N-acylsphing-4-enine + a 1,2-diacyl-sn-glycero-3-phosphoethanolamine = an N-acylsphing-4-enine 1-phosphoethanolamine + a 1,2-diacyl-sn-glycerol. The enzyme catalyses an N-acylsphinganine + a 1,2-diacyl-sn-glycero-3-phosphoethanolamine = an N-acylsphinganine-1-phosphoethanolamine + a 1,2-diacyl-sn-glycerol. It carries out the reaction an N-acyl-(4R)-4-hydroxysphinganine + a 1,2-diacyl-sn-glycero-3-phosphoethanolamine = an N-acyl-(4R)-4-hydroxysphinganine-1-phosphoethanolamine + a 1,2-diacyl-sn-glycerol. The catalysed reaction is N-hexadecanoylsphinganine + a 1,2-diacyl-sn-glycero-3-phosphoethanolamine = N-hexadecanoyl-sphinganine-1-phosphoethanolamine + a 1,2-diacyl-sn-glycerol. It catalyses the reaction N-hexadecanoyl-(4R)-hydroxysphinganine + a 1,2-diacyl-sn-glycero-3-phosphoethanolamine = N-hexadecanoyl-(4R)-hydroxysphinganine-1-phosphoethanolamine + a 1,2-diacyl-sn-glycerol. Its pathway is sphingolipid metabolism. Synthesizes sphingolipids through transfer of a phosphatidyl head group from a glycerophospholipid on to the primary hydroxyl of a ceramide in the lumen of the endoplasmic reticulum. Catalyzes the synthesis of ceramide phosphoethanolamines (CPEs) (such as N-acylsphing-4-enine 1-phosphoethanolamine) by transferring phosphoethanolamine head group, which is smaller and more hydrophilic than the phosphocholine (PC) headgroup transferred in the canonical sphingomyelin synthesis (SMS) reaction by SMS1 or SMS2, from a phosphatidylethanolamine (1,2-diacyl-sn-glycero-3-phosphoethanolamine, PE) to a ceramide (such as N-acylsphing-4-enine). The larger PC prevents an efficient fit in the enzyme's catalytic pocket, leading to little or no SMS activity. In vitro, in the absence of ceramide, it has PLC activity with preference for phosphatidylinositol and phosphatidic acid, but also hydrolyzes phosphatidylethanolamine. In Homo sapiens (Human), this protein is Sphingomyelin synthase-related protein 1.